Consider the following 288-residue polypeptide: Acetylglutamate kinase (288 aa).

Residues 73 to 74 (GG), Arg-95, and Asn-186 contribute to the substrate site.

This sequence belongs to the acetylglutamate kinase family. ArgB subfamily.

It is found in the cytoplasm. The catalysed reaction is N-acetyl-L-glutamate + ATP = N-acetyl-L-glutamyl 5-phosphate + ADP. Its pathway is amino-acid biosynthesis; L-arginine biosynthesis; N(2)-acetyl-L-ornithine from L-glutamate: step 2/4. In terms of biological role, catalyzes the ATP-dependent phosphorylation of N-acetyl-L-glutamate. The chain is Acetylglutamate kinase from Pelagibacter ubique (strain HTCC1062).